The chain runs to 72 residues: Protein kish-A (72 aa).

An N-terminal signal peptide occupies residues 1 to 26; sequence MSAIFNFQSLLIVILLLICTCAYLRS. Over 27-53 the chain is Extracellular; the sequence is LVPNLLDKNKTGVLGIFWKCARIGERK. N-linked (GlcNAc...) asparagine glycosylation occurs at N35. Residues 54–71 form a helical membrane-spanning segment; the sequence is SPYVAVCCVVMAFSILFM. Position 72 (Q72) is a topological domain, cytoplasmic.

It belongs to the KISH family.

It is found in the golgi apparatus membrane. Involved in the early part of the secretory pathway. The polypeptide is Protein kish-A (tmem167a) (Xenopus laevis (African clawed frog)).